Consider the following 278-residue polypeptide: Envelope glycoprotein L (278 aa).

Residues 1-30 form the signal peptide; that stretch reads MCRRPDCGFSFSPGPVILLWCCLLLPIVSS. The gL betaherpesvirus-type domain occupies 43-256; that stretch reads VPAECPELTR…DKYYAGLPPE (214 aa). Cysteine 154 and cysteine 159 are oxidised to a cystine.

This sequence belongs to the herpesviridae glycoprotein L (gL) family. Betaherpesvirinae gL subfamily. As to quaternary structure, interacts with glycoprotein H (gH); this interaction is necessary for the correct processing and cell surface expression of gH. Forms the envelope pentamer complex (PC) composed of gH, gL, UL128, UL130, and UL131A. The pentamer interacts with host NRP2. Forms the envelope trimer complex composed of gH, gL, and gO. The trimer interacts with host PDGFRA. The trimer also interacts with host EPHA2.

Its subcellular location is the virion membrane. The protein resides in the host cell membrane. It is found in the host Golgi apparatus. It localises to the host trans-Golgi network. Its function is as follows. The heterodimer glycoprotein H-glycoprotein L is required for the fusion of viral and plasma membranes leading to virus entry into the host cell. Acts as a functional inhibitor of gH and maintains gH in an inhibited form. Upon binding to host integrins, gL dissociates from gH leading to activation of the viral fusion glycoproteins gB and gH. In human cytomegalovirus, forms two distincts complexes to mediate viral entry, a trimer and a pentamer at the surface of the virion envelope. The gH-gL-gO trimer is required for infection in fibroblasts by interacting with host PDGFRA, and in glioblastoma cells by interacting with host EPHA2. The gH-gL-UL128-UL130-UL131A pentamer is essential for viral entry in epithelial, endothelial and myeloid cells via interaction with host NRP2. The polypeptide is Envelope glycoprotein L (Human cytomegalovirus (strain 5035) (HHV-5)).